The primary structure comprises 225 residues: Transcriptional activator protein CUP2 (225 aa).

The copper-fist DNA-binding region spans methionine 1–serine 40. The binds copper and DNA stretch occupies residues methionine 1 to arginine 108. Residues cysteine 11, cysteine 14, cysteine 23, and histidine 25 each coordinate Zn(2+). A required for transcriptional activation region spans residues alanine 109 to glutamine 225.

It is found in the nucleus. Functionally, trans-acting regulatory protein that activates transcription of the CUP1 gene (metallothionein) in response to copper ions. Binds to the CUP1 UAS sequence 5'-GCTTCTTTTCCGCTGA-3'. Binds DNA only in presence of copper or silver. Copper seems to alter the conformation of the protein. The polypeptide is Transcriptional activator protein CUP2 (CUP2) (Saccharomyces cerevisiae (strain ATCC 204508 / S288c) (Baker's yeast)).